Consider the following 349-residue polypeptide: Magnesium-protoporphyrin IX monomethyl ester [oxidative] cyclase (349 aa).

The span at 1-10 (MTATTATAPT) shows a compositional bias: low complexity. Positions 1-23 (MTATTATAPTMRGGGRNELPPHL) are disordered.

The protein belongs to the AcsF family. Fe cation serves as cofactor.

It catalyses the reaction Mg-protoporphyrin IX 13-monomethyl ester + 3 NADPH + 3 O2 + 2 H(+) = 3,8-divinyl protochlorophyllide a + 3 NADP(+) + 5 H2O. It participates in porphyrin-containing compound metabolism; chlorophyll biosynthesis (light-independent). Catalyzes the formation of the isocyclic ring in chlorophyll biosynthesis. Mediates the cyclase reaction, which results in the formation of divinylprotochlorophyllide (Pchlide) characteristic of all chlorophylls from magnesium-protoporphyrin IX 13-monomethyl ester (MgPMME). The polypeptide is Magnesium-protoporphyrin IX monomethyl ester [oxidative] cyclase (Prochlorococcus marinus (strain MIT 9313)).